Consider the following 449-residue polypeptide: Early 53 kDa protein (449 aa).

Residues 1-68 (MNRFFRENNI…CTSPAKPLEH (68 aa)) form a disordered region. Over residues 31-42 (NSPPSPVRPPPK) the composition is skewed to pro residues. A C4-type zinc finger spans residues 379–399 (CKLCKKTKLYYKNPVLYCTKC).

The protein localises to the virion. It localises to the host cytoplasm. It is found in the host nucleus. Its subcellular location is the host cell membrane. Its function is as follows. May act as a packaging protein or as a structural component associated with intranuclear baculovirus virion assembly. This Autographa californica nuclear polyhedrosis virus (AcMNPV) protein is Early 53 kDa protein (ME53).